Consider the following 237-residue polypeptide: ATP synthase subunit a (237 aa).

6 helical membrane passes run 18–38, 77–97, 103–123, 132–152, 185–205, and 209–229; these read STLWMAIGVLMIALLMVVGTL, IFTLFLFILFSNFLGLIPMAF, IAVTGVMAMGVFIGVTALGFM, LFWVSAAPLPLRPILAVIEVI, LILFSFVGVIVTPLSVLAIVA, and LEILVAFVQAYVFTILTCVYL.

The protein belongs to the ATPase A chain family. As to quaternary structure, F-type ATPases have 2 components, CF(1) - the catalytic core - and CF(0) - the membrane proton channel. CF(1) has five subunits: alpha(3), beta(3), gamma(1), delta(1), epsilon(1). CF(0) has three main subunits: a(1), b(2) and c(9-12). The alpha and beta chains form an alternating ring which encloses part of the gamma chain. CF(1) is attached to CF(0) by a central stalk formed by the gamma and epsilon chains, while a peripheral stalk is formed by the delta and b chains.

The protein resides in the cellular chromatophore membrane. Key component of the proton channel; it plays a direct role in the translocation of protons across the membrane. This Rhodobacter capsulatus (Rhodopseudomonas capsulata) protein is ATP synthase subunit a.